A 749-amino-acid polypeptide reads, in one-letter code: Metabotropic glutamate receptor-like protein M (749 aa).

The first 22 residues, 1-22 (MIKLILSLIFLIICCNINPSES), serve as a signal peptide directing secretion. Residues 23–385 (FKLITLTTGP…KIEFSSSVQK (363 aa)) lie on the Extracellular side of the membrane. N67, N164, N257, N271, and N345 each carry an N-linked (GlcNAc...) asparagine glycan. Residues 386-406 (GFSIVSGCLIAFVILMMVGIV) form a helical membrane-spanning segment. The Cytoplasmic portion of the chain corresponds to 407 to 419 (YYKDTPSIRSASP). Residues 420-440 (IFLNFSLIGGIIIYIGIIIWV) traverse the membrane as a helical segment. Residues 441–456 (GPISTHQCNARFWLVT) are Extracellular-facing. The helical transmembrane segment at 457 to 477 (LGFSTLIGSLVVKNFRIWLIF) threads the bilayer. Residues 478–492 (DNPELKAIKITNYQL) lie on the Cytoplasmic side of the membrane. The helical transmembrane segment at 493-513 (FPWVGLCLVINIVLMAILTSV) threads the bilayer. Topologically, residues 514–544 (GDLKAIEAQGIDSLGKYEYMTVCKMNSAGAS) are extracellular. The helical transmembrane segment at 545 to 565 (TLYSILAYFAALLLVGVFVSW) threads the bilayer. At 566-579 (KIRIVDIEEFNESK) the chain is on the cytoplasmic side. Residues 580–600 (AIANTLYAVSFCLFVIVPLMI) traverse the membrane as a helical segment. The Extracellular portion of the chain corresponds to 601–609 (SPQEKQSET). A helical transmembrane segment spans residues 610–630 (IILCVAGLFITTAALLIVFIP). The Cytoplasmic portion of the chain corresponds to 631 to 749 (KFWRVFIYGK…EEPVKTESQE (119 aa)). Positions 658 to 749 (ARAESLSKNS…EEPVKTESQE (92 aa)) are disordered. A compositionally biased stretch (polar residues) spans 698–716 (SSLSEPNKPTKNNDGNVNV). The span at 725–740 (FTDDTISEFDENEVNE) shows a compositional bias: acidic residues.

The protein in the N-terminal section; belongs to the BMP lipoprotein family. It in the C-terminal section; belongs to the G-protein coupled receptor 3 family. GABA-B receptor subfamily.

The protein resides in the membrane. In Dictyostelium discoideum (Social amoeba), this protein is Metabotropic glutamate receptor-like protein M (grlM).